A 239-amino-acid chain; its full sequence is MGRKWNNIKEKKASKDANTSRIYAKFGREIYVAAKQGEPDPESNQALKVVLERAKTYSVPKNIIERAIEKAKGGAEENYDELRYEGFGPNGSMIIVDALTNNVNRTAPEVRAAFGKNGGNMGVSGSVAYMFDATAVIGVEGKTADEALEILMEADVDVRDILEEDDSAIVYAEPDQFHAVQEAFKNAGVEEFTVAELTMLAQSEVTLPDDAKEQFEKLIDALEDLEDVQQVYHNVDLGE.

Belongs to the TACO1 family. YeeN subfamily.

It localises to the cytoplasm. This chain is Probable transcriptional regulatory protein YeeI (yeeI), found in Bacillus subtilis (strain 168).